The chain runs to 375 residues: tRNA-specific 2-thiouridylase MnmA (375 aa).

Residues 20–27 (AMSGGVDS) and Leu-46 each bind ATP. The active-site Nucleophile is the Cys-114. An intrachain disulfide couples Cys-114 to Cys-211. Residue Gly-138 participates in ATP binding. The interval 160-162 (RDQ) is interaction with tRNA. Residue Cys-211 is the Cysteine persulfide intermediate of the active site.

It belongs to the MnmA/TRMU family.

The protein resides in the cytoplasm. The enzyme catalyses S-sulfanyl-L-cysteinyl-[protein] + uridine(34) in tRNA + AH2 + ATP = 2-thiouridine(34) in tRNA + L-cysteinyl-[protein] + A + AMP + diphosphate + H(+). Functionally, catalyzes the 2-thiolation of uridine at the wobble position (U34) of tRNA, leading to the formation of s(2)U34. The chain is tRNA-specific 2-thiouridylase MnmA from Ruegeria pomeroyi (strain ATCC 700808 / DSM 15171 / DSS-3) (Silicibacter pomeroyi).